A 472-amino-acid chain; its full sequence is Glycine--tRNA ligase (472 aa).

Positions 109 and 174 each coordinate substrate. ATP contacts are provided by residues 206–208 (RNE), 216–221 (FRTREF), 293–294 (EL), and 337–340 (GLTR). 221–225 (FEQME) serves as a coordination point for substrate. A substrate-binding site is contributed by 333–337 (EPAAG).

Belongs to the class-II aminoacyl-tRNA synthetase family. In terms of assembly, homodimer.

It localises to the cytoplasm. It catalyses the reaction tRNA(Gly) + glycine + ATP = glycyl-tRNA(Gly) + AMP + diphosphate. Functionally, catalyzes the attachment of glycine to tRNA(Gly). The sequence is that of Glycine--tRNA ligase from Cutibacterium acnes (strain DSM 16379 / KPA171202) (Propionibacterium acnes).